A 100-amino-acid polypeptide reads, in one-letter code: Small ribosomal subunit protein uS14c (100 aa).

The protein belongs to the universal ribosomal protein uS14 family. Part of the 30S ribosomal subunit.

It localises to the plastid. Its subcellular location is the chloroplast. In terms of biological role, binds 16S rRNA, required for the assembly of 30S particles. The polypeptide is Small ribosomal subunit protein uS14c (Oedogonium cardiacum (Filamentous green alga)).